A 230-amino-acid polypeptide reads, in one-letter code: MEGQRWLPLEANPEVTNQFLKQLGLHPNWQFVDVYGMDPELLSMVPRPVCAVLLLFPITEKYEVFRTEEEEKIKSQGQDVTSSVYFMKQTISNACGTIGLIHAIANNKDKMHFESGSTLKKFLEESVSMSPEERARYLENYDAIRVTHETSAHEGQTEAPSIDEKVDLHFIALVHVDGHLYELDGRKPFPINHGETSDETLLEDAIEVCKKFMERDPDELRFNAIALSAA.

The region spanning 5-229 is the UCH catalytic domain; the sequence is RWLPLEANPE…LRFNAIALSA (225 aa). Residues 8 to 13 form an interaction with ubiquitin region; the sequence is PLEANP. C95 functions as the Nucleophile in the catalytic mechanism. Phosphoserine is present on S130. Residues 152-159 form an interaction with ubiquitin. Crossover loop which restricts access of large ubiquitin adducts to the active site region; it reads AHEGQTEA. Catalysis depends on H169, which acts as the Proton donor. The interval 219–224 is interaction with ubiquitin; sequence ELRFNA.

This sequence belongs to the peptidase C12 family. In terms of assembly, preferentially binds diubiquitin; the interaction does not hydrolyze diubiquitin but, in vitro, inhibits the hydrolyzing activity on other substrates. Highly expressed in heart, skeletal muscle, and testis.

It is found in the cytoplasm. It carries out the reaction Thiol-dependent hydrolysis of ester, thioester, amide, peptide and isopeptide bonds formed by the C-terminal Gly of ubiquitin (a 76-residue protein attached to proteins as an intracellular targeting signal).. Its activity is regulated as follows. Inhibited by monoubiquitin and diubiquitin. Functionally, deubiquitinating enzyme (DUB) that controls levels of cellular ubiquitin through processing of ubiquitin precursors and ubiquitinated proteins. Thiol protease that recognizes and hydrolyzes a peptide bond at the C-terminal glycine of either ubiquitin or NEDD8. Has a 10-fold preference for Arg and Lys at position P3'', and exhibits a preference towards 'Lys-48'-linked ubiquitin chains. Deubiquitinates ENAC in apical compartments, thereby regulating apical membrane recycling. Indirectly increases the phosphorylation of IGFIR, AKT and FOXO1 and promotes insulin-signaling and insulin-induced adipogenesis. Required for stress-response retinal, skeletal muscle and germ cell maintenance. May be involved in working memory. Can hydrolyze UBB(+1), a mutated form of ubiquitin which is not effectively degraded by the proteasome and is associated with neurogenerative disorders. This is Ubiquitin carboxyl-terminal hydrolase isozyme L3 (UCHL3) from Homo sapiens (Human).